The chain runs to 180 residues: Bifunctional protein PyrR (180 aa).

Positions 101 to 113 (VILVDDVLYTGRT) match the PRPP-binding motif.

It belongs to the purine/pyrimidine phosphoribosyltransferase family. PyrR subfamily. In terms of assembly, homodimer and homohexamer; in equilibrium.

It carries out the reaction UMP + diphosphate = 5-phospho-alpha-D-ribose 1-diphosphate + uracil. Functionally, regulates transcriptional attenuation of the pyrimidine nucleotide (pyr) operon by binding in a uridine-dependent manner to specific sites on pyr mRNA. This disrupts an antiterminator hairpin in the RNA and favors formation of a downstream transcription terminator, leading to a reduced expression of downstream genes. In terms of biological role, also displays a weak uracil phosphoribosyltransferase activity which is not physiologically significant. The polypeptide is Bifunctional protein PyrR (Bacillus thuringiensis subsp. konkukian (strain 97-27)).